Consider the following 422-residue polypeptide: Inner membrane ALBINO3-like protein 2, chloroplastic (422 aa).

Positions 1-10 are enriched in polar residues; that stretch reads MALQMKQSPS. The disordered stretch occupies residues 1–22; sequence MALQMKQSPSMGVRRASQPVLP. A helical membrane pass occupies residues 65–85; it reads LYTLAEGGPIDVLAQFFEFVL. The Stromal portion of the chain corresponds to 86–96; sequence QTLDEGLESAK. The chain crosses the membrane as a helical span at residues 97–117; sequence IPYSYGFAIIALTVLVKVATF. Residues 118–166 lie on the Lumenal side of the membrane; sequence PLTQKQVESTLSLQALQPRVKELQAKYADDPENLQLETARLYKEAGVNP. Residues 167 to 187 form a helical membrane-spanning segment; the sequence is LAGCFPTLATIPVFIGLYNAL. At 188-225 the chain is on the stromal side; the sequence is SNAAKEGLLTEGFFWIPSLGGPTTIGGGLEWLVPFENG. The helical transmembrane segment at 226–246 threads the bilayer; sequence APPVGWANAAAYLVMPVLLVA. Residues 247-275 lie on the Lumenal side of the membrane; that stretch reads SQYASQKIISSQNNQDPSQQQAQAILKFL. Residues 276 to 296 traverse the membrane as a helical segment; it reads PLMIGWFSLNVPSGLTLYWFV. Residues 297–422 are Stromal-facing; the sequence is NNLLSTGQQL…GSEEGKDNSA (126 aa). The disordered stretch occupies residues 325 to 422; the sequence is TAGSSTPIVK…GSEEGKDNSA (98 aa). Residues 334–350 are compositionally biased toward basic and acidic residues; sequence KPKEERVKKVTGKELGS. Positions 358-367 are enriched in acidic residues; that stretch reads DGEEVEDVEV. Residues 368-380 show a composition bias toward low complexity; sequence EVVSSGSSSSSGS. A compositionally biased stretch (basic and acidic residues) spans 386–400; it reads RKGEKFRALKAREAA.

This sequence belongs to the OXA1/ALB3/YidC (TC 2.A.9.2) family.

The protein localises to the plastid. It localises to the chloroplast thylakoid membrane. Functionally, required for the insertion of some light-harvesting complexes (LHC) proteins into the chloroplast thylakoid membrane. Essential for the assembly and activity of LHC I and II. Its function is probably partly distinct from that of ALB3.1. This is Inner membrane ALBINO3-like protein 2, chloroplastic (ALB3.2) from Chlamydomonas reinhardtii (Chlamydomonas smithii).